A 691-amino-acid polypeptide reads, in one-letter code: Elongation factor G (691 aa).

Residues 8 to 283 form the tr-type G domain; it reads EDYRNFGIMA…AVVDYLPSPV (276 aa). Residues 17 to 24, 81 to 85, and 135 to 138 each bind GTP; these read AHIDAGKT, DTPGH, and NKMD.

The protein belongs to the TRAFAC class translation factor GTPase superfamily. Classic translation factor GTPase family. EF-G/EF-2 subfamily.

It localises to the cytoplasm. Catalyzes the GTP-dependent ribosomal translocation step during translation elongation. During this step, the ribosome changes from the pre-translocational (PRE) to the post-translocational (POST) state as the newly formed A-site-bound peptidyl-tRNA and P-site-bound deacylated tRNA move to the P and E sites, respectively. Catalyzes the coordinated movement of the two tRNA molecules, the mRNA and conformational changes in the ribosome. The protein is Elongation factor G of Methylorubrum populi (strain ATCC BAA-705 / NCIMB 13946 / BJ001) (Methylobacterium populi).